Here is a 492-residue protein sequence, read N- to C-terminus: 3-ketoacyl-CoA synthase 5 (492 aa).

Transmembrane regions (helical) follow at residues 20–40 and 59–79; these read LINN…AIEL and LLHI…YFMS. One can recognise an FAE domain in the interval 76–365; the sequence is YFMSKPRTVY…FLSSLIGRKI (290 aa). Active-site residues include Cys-220, His-299, His-383, His-387, His-416, and Asn-420.

It belongs to the thiolase-like superfamily. Chalcone/stilbene synthases family. As to expression, expressed in siliques, flowers, leaves and seedlings.

Its subcellular location is the membrane. It catalyses the reaction a very-long-chain acyl-CoA + malonyl-CoA + H(+) = a very-long-chain 3-oxoacyl-CoA + CO2 + CoA. It functions in the pathway lipid metabolism; fatty acid biosynthesis. Its activity is regulated as follows. Inhibited by K3 herbicides such as alachlor, allidochlor, anilofos, cafenstrole and flufenacet. Strongly inhibited by metazachlor and mefluidide. Mediates mostly the synthesis of VLCFAs from 26 to 30 carbons in length (e.g. C20:1, C26, C28, C30). The protein is 3-ketoacyl-CoA synthase 5 of Arabidopsis thaliana (Mouse-ear cress).